We begin with the raw amino-acid sequence, 713 residues long: Ribosomal RNA large subunit methyltransferase K/L (713 aa).

The THUMP domain occupies 43–154; the sequence is LAYRITLWTR…NGVITIAMNF (112 aa).

The protein belongs to the methyltransferase superfamily. RlmKL family.

Its subcellular location is the cytoplasm. The enzyme catalyses guanosine(2445) in 23S rRNA + S-adenosyl-L-methionine = N(2)-methylguanosine(2445) in 23S rRNA + S-adenosyl-L-homocysteine + H(+). It catalyses the reaction guanosine(2069) in 23S rRNA + S-adenosyl-L-methionine = N(2)-methylguanosine(2069) in 23S rRNA + S-adenosyl-L-homocysteine + H(+). Its function is as follows. Specifically methylates the guanine in position 2445 (m2G2445) and the guanine in position 2069 (m7G2069) of 23S rRNA. This Shewanella sp. (strain MR-7) protein is Ribosomal RNA large subunit methyltransferase K/L.